The chain runs to 307 residues: Farnesol kinase, chloroplastic (307 aa).

Residues 1–65 (MATTSTTTKL…TKIRKSSLAA (65 aa)) constitute a chloroplast transit peptide. The next 7 helical transmembrane spans lie at 77–97 (VCAFGVTSIVAFSCLGFWGEI), 116–136 (IGLVFMLCWPLFSSGIQGALF), 137–157 (ASLVPGLNIVRMLLLGLGVYH), 177–194 (GPLYYVLSITSACIYYWK), 197–217 (PIAIAVICNLCAGDGMADIVG), 237–257 (IGMATAGFLASVAYMYYFASF), and 265–285 (GMILRFLVISIASALVESLPI).

It belongs to the polyprenol kinase family.

The protein resides in the plastid. It is found in the chloroplast membrane. It carries out the reaction (2E,6E)-farnesol + CTP = (2E,6E)-farnesyl phosphate + CDP + H(+). The enzyme catalyses (2E,6E)-farnesol + ATP = (2E,6E)-farnesyl phosphate + ADP + H(+). The catalysed reaction is (2E)-geraniol + ATP = (2E)-geranyl phosphate + ADP + H(+). It catalyses the reaction (2E,6E,10E)-geranylgeraniol + ATP = (2E,6E,10E)-geranylgeranyl phosphate + ADP + H(+). Kinase involved in negative regulation of abscisic acid (ABA) signaling. Substrate preference is farnesol &gt; geraniol &gt; geranylgeraniol, but has no activity with farnesyl phosphate. Can use CTP &gt; ATP &gt; GTP = UTP as phosphoryl donor. This is Farnesol kinase, chloroplastic from Arabidopsis thaliana (Mouse-ear cress).